The following is a 428-amino-acid chain: Endoplasmic reticulum junction formation protein lunapark (428 aa).

A lipid anchor (N-myristoyl glycine) is attached at Gly2. The Cytoplasmic portion of the chain corresponds to 2 to 45; that stretch reads GGLFSRWRTKLSTVEVLESIDKEIQALEEFREKNQRLQKLRVGR. The stretch at 16 to 43 forms a coiled coil; that stretch reads EVLESIDKEIQALEEFREKNQRLQKLRV. A helical membrane pass occupies residues 46–66; the sequence is LILYSSVLYLFTCLIVYLWYL. The Lumenal segment spans residues 67 to 77; sequence PDEFTARLAMT. A helical transmembrane segment spans residues 78–98; the sequence is LPFFAFPLIIWSIRTVIIFFF. The Cytoplasmic portion of the chain corresponds to 99 to 428; that stretch reads SKRTERNNEA…ELNGESLTAE (330 aa). The stretch at 102 to 128 forms a coiled coil; the sequence is TERNNEALDDLKSQRKKILEEVMEKET. A phosphoserine mark is found at Ser114, Ser153, Ser177, Ser182, and Ser194. The interval 143-248 is disordered; it reads SKKAKECEPP…PPGPPLARPI (106 aa). Residues 185–198 are compositionally biased toward pro residues; the sequence is QGPPPQVPVSPGPP. 2 positions are modified to phosphothreonine: Thr211 and Thr213. Ser217 and Ser227 each carry phosphoserine. The C4-type; plays a role in ER morphology zinc finger occupies 276–301; sequence CQQCFSHNGMALKEEFEYIAFRCAYC. 3 positions are modified to phosphoserine: Ser321, Ser353, and Ser384. Positions 361–428 are disordered; sequence NNTEQTDDKI…ELNGESLTAE (68 aa). Positions 386–401 are enriched in acidic residues; that stretch reads SEEPEEKQETENEEAS. Residue Ser414 is modified to Phosphoserine.

This sequence belongs to the lunapark family. As to quaternary structure, homodimer; homodimerization requires the C4-type zinc finger motif and decreases during mitosis in a phosphorylation-dependent manner. Post-translationally, myristoylated; myristoylation is necessary for the endoplasmic reticulum (ER) three-way ER tubular junction formation, but is not required neither for membrane translocation, membrane topology formation, nor for the specific localization to ER membranes. In terms of processing, phosphorylated. Phosphorylation occurs at Ser-177, Ser-182, Ser-217, Ser-227, Ser-321 and Ser-384 during interphase. Phosphorylation occurs at Ser-114, Ser-153, Ser-194, Thr-211 and Ser-353 during mitosis; these phosphorylations reduce both its homodimerization and the ER three-way tubular junction formation. Subject to proteasomal degradation following phosphorylation during mitosis.

It localises to the endoplasmic reticulum membrane. Its function is as follows. Endoplasmic reticulum (ER)-shaping membrane protein that plays a role in determining ER morphology. Involved in the stabilization of nascent three-way ER tubular junctions within the ER network. May also play a role as a curvature-stabilizing protein within three-way ER tubular junction network. May be involved in limb and central nervous system development. This Pongo abelii (Sumatran orangutan) protein is Endoplasmic reticulum junction formation protein lunapark.